A 239-amino-acid chain; its full sequence is Leucine rich adaptor protein 1 (239 aa).

LRR repeat units follow at residues 55–83 (LGDK…LVTL) and 93–114 (LLEE…QYSL). The span at 107–116 (LTSSQYSLTG) shows a compositional bias: low complexity. 2 disordered regions span residues 107-139 (LTSS…TDRL) and 200-219 (KPPG…DESA). Phosphoserine occurs at positions 118, 126, 129, and 213.

As to quaternary structure, forms a tripartite complex with CDC42BPA/CDC42BPB and MYO18A acting as an adapter connecting both. Its binding to CDC42BPA/CDC42BPB results in their activation by abolition of their negative autoregulation. Interacts with CDC42BPA and CDC42BPB.

The protein localises to the cytoplasm. Acts as an activator of the canonical NF-kappa-B pathway and drive the production of pro-inflammatory cytokines. Promotes the antigen (Ag)-presenting and priming function of dendritic cells via the canonical NF-kappa-B pathway. In concert with MYO18A and CDC42BPA/CDC42BPB, is involved in modulating lamellar actomyosin retrograde flow that is crucial to cell protrusion and migration. Activates CDC42BPA/CDC42BPB and targets it to actomyosin through its interaction with MYO18A, leading to MYL9/MLC2 phosphorylation and MYH9/MYH10-dependent actomyosin assembly in the lamella. The protein is Leucine rich adaptor protein 1 (LURAP1) of Homo sapiens (Human).